The primary structure comprises 261 residues: tRNA 5-carboxymethoxyuridine methyltransferase (261 aa).

S-adenosyl-L-methionine contacts are provided by residues R26, 52–53, D73, 102–103, and H119; these read GG and AQ.

This sequence belongs to the class I-like SAM-binding methyltransferase superfamily. CmoM family. As to quaternary structure, homodimer.

It carries out the reaction 5-carboxymethoxyuridine(34) in tRNA + S-adenosyl-L-methionine = 5-methoxycarbonylmethoxyuridine(34) in tRNA + S-adenosyl-L-homocysteine. Its function is as follows. Catalyzes the methylation of 5-carboxymethoxyuridine (cmo5U) to form 5-methoxycarbonylmethoxyuridine (mcmo5U) at position 34 in tRNAs. In Escherichia coli O157:H7, this protein is tRNA 5-carboxymethoxyuridine methyltransferase.